The chain runs to 450 residues: Tubulin alpha-3E chain (450 aa).

Residues 1 to 4 (MREC) carry the MREC motif motif. Gln-11 is a GTP binding site. Lys-40 carries the post-translational modification N6-acetyllysine. Residues Glu-71, Ser-140, Gly-144, Thr-145, Thr-179, Asn-206, and Asn-228 each contribute to the GTP site. Glu-71 is a Mg(2+) binding site. The active site involves Glu-254. Residue Tyr-282 is modified to 3'-nitrotyrosine. Ser-439 is modified (phosphoserine). A 3'-nitrotyrosine modification is found at Tyr-450.

Belongs to the tubulin family. Dimer of alpha and beta chains. A typical microtubule is a hollow water-filled tube with an outer diameter of 25 nm and an inner diameter of 15 nM. Alpha-beta heterodimers associate head-to-tail to form protofilaments running lengthwise along the microtubule wall with the beta-tubulin subunit facing the microtubule plus end conferring a structural polarity. Microtubules usually have 13 protofilaments but different protofilament numbers can be found in some organisms and specialized cells. Requires Mg(2+) as cofactor. Some glutamate residues at the C-terminus are polyglutamylated, resulting in polyglutamate chains on the gamma-carboxyl group. Polyglutamylation plays a key role in microtubule severing by spastin (SPAST). SPAST preferentially recognizes and acts on microtubules decorated with short polyglutamate tails: severing activity by SPAST increases as the number of glutamates per tubulin rises from one to eight, but decreases beyond this glutamylation threshold. Glutamylation is also involved in cilia motility. In terms of processing, some glutamate residues at the C-terminus are monoglycylated but not polyglycylated due to the absence of functional TTLL10 in human. Monoglycylation is mainly limited to tubulin incorporated into cilia and flagella axonemes, which is required for their stability and maintenance. Flagella glycylation controls sperm motility. Both polyglutamylation and monoglycylation can coexist on the same protein on adjacent residues, and lowering glycylation levels increases polyglutamylation, and reciprocally. Post-translationally, acetylation of alpha chains at Lys-40 is located inside the microtubule lumen. This modification has been correlated with increased microtubule stability, intracellular transport and ciliary assembly. Methylation of alpha chains at Lys-40 is found in mitotic microtubules and is required for normal mitosis and cytokinesis contributing to genomic stability. In terms of processing, nitration of Tyr-450 is irreversible and interferes with normal dynein intracellular distribution. Post-translationally, undergoes a tyrosination/detyrosination cycle, the cyclic removal and re-addition of a C-terminal tyrosine residue by the enzymes tubulin tyrosine carboxypeptidase (MATCAP1/KIAA0895L, VASH1 or VASH2) and tubulin tyrosine ligase (TTL), respectively. Tyrosination promotes microtubule interaction with CAP-Gly domain-containing proteins such as CLIP1, CLIP2 and DCTN1. Tyrosination regulates the initiation of dynein-dynactin motility via interaction with DCTN1, which brings the dynein-dynactin complex into contact with microtubules. In neurons, tyrosinated tubulins mediate the initiation of retrograde vesicle transport. In terms of processing, detyrosination is involved in metaphase plate congression by guiding chromosomes during mitosis: detyrosination promotes interaction with CENPE, promoting pole-proximal transport of chromosomes toward the equator. Detyrosination increases microtubules-dependent mechanotransduction in dystrophic cardiac and skeletal muscle. In cardiomyocytes, detyrosinated microtubules are required to resist to contractile compression during contraction: detyrosination promotes association with desmin (DES) at force-generating sarcomeres, leading to buckled microtubules and mechanical resistance to contraction.

It localises to the cytoplasm. It is found in the cytoskeleton. The catalysed reaction is GTP + H2O = GDP + phosphate + H(+). Functionally, tubulin is the major constituent of microtubules, a cylinder consisting of laterally associated linear protofilaments composed of alpha- and beta-tubulin heterodimers. Microtubules grow by the addition of GTP-tubulin dimers to the microtubule end, where a stabilizing cap forms. Below the cap, tubulin dimers are in GDP-bound state, owing to GTPase activity of alpha-tubulin. The protein is Tubulin alpha-3E chain (TUBA3E) of Homo sapiens (Human).